Reading from the N-terminus, the 214-residue chain is Probable transaldolase (214 aa).

Lysine 83 functions as the Schiff-base intermediate with substrate in the catalytic mechanism.

This sequence belongs to the transaldolase family. Type 3B subfamily.

It is found in the cytoplasm. It catalyses the reaction D-sedoheptulose 7-phosphate + D-glyceraldehyde 3-phosphate = D-erythrose 4-phosphate + beta-D-fructose 6-phosphate. It functions in the pathway carbohydrate degradation; pentose phosphate pathway; D-glyceraldehyde 3-phosphate and beta-D-fructose 6-phosphate from D-ribose 5-phosphate and D-xylulose 5-phosphate (non-oxidative stage): step 2/3. Functionally, transaldolase is important for the balance of metabolites in the pentose-phosphate pathway. The sequence is that of Probable transaldolase from Desulfotalea psychrophila (strain LSv54 / DSM 12343).